A 269-amino-acid polypeptide reads, in one-letter code: Cytochrome c oxidase subunit 3 (269 aa).

7 helical membrane-spanning segments follow: residues 21–41 (PWPMLLSFALLSLTLSLGLTM), 45–65 (IGNMNLVYLALLVVTLTSVFW), 90–110 (GFLLFVLSEVLIFAGLFWAYF), 138–160 (PLLNTIILLSSGATITYSHHALI), 167–187 (ALSGLFITIWLIIIFVTCQYI), 205–225 (FYAGTGLHFLHMVMLAVMLII), and 247–267 (ILYCHVLDIIWLFLYIVFYWW).

It belongs to the cytochrome c oxidase subunit 3 family. Component of the cytochrome c oxidase (complex IV, CIV), a multisubunit enzyme composed of a catalytic core of 3 subunits and several supernumerary subunits. The complex exists as a monomer or a dimer and forms supercomplexes (SCs) in the inner mitochondrial membrane with ubiquinol-cytochrome c oxidoreductase (cytochrome b-c1 complex, complex III, CIII).

The protein localises to the mitochondrion inner membrane. The catalysed reaction is 4 Fe(II)-[cytochrome c] + O2 + 8 H(+)(in) = 4 Fe(III)-[cytochrome c] + 2 H2O + 4 H(+)(out). In terms of biological role, component of the cytochrome c oxidase, the last enzyme in the mitochondrial electron transport chain which drives oxidative phosphorylation. The respiratory chain contains 3 multisubunit complexes succinate dehydrogenase (complex II, CII), ubiquinol-cytochrome c oxidoreductase (cytochrome b-c1 complex, complex III, CIII) and cytochrome c oxidase (complex IV, CIV), that cooperate to transfer electrons derived from NADH and succinate to molecular oxygen, creating an electrochemical gradient over the inner membrane that drives transmembrane transport and the ATP synthase. Cytochrome c oxidase is the component of the respiratory chain that catalyzes the reduction of oxygen to water. Electrons originating from reduced cytochrome c in the intermembrane space (IMS) are transferred via the dinuclear copper A center (CU(A)) of subunit 2 and heme A of subunit 1 to the active site in subunit 1, a binuclear center (BNC) formed by heme A3 and copper B (CU(B)). The BNC reduces molecular oxygen to 2 water molecules using 4 electrons from cytochrome c in the IMS and 4 protons from the mitochondrial matrix. The chain is Cytochrome c oxidase subunit 3 (COX3) from Candida glabrata (strain ATCC 2001 / BCRC 20586 / JCM 3761 / NBRC 0622 / NRRL Y-65 / CBS 138) (Yeast).